The following is an 86-amino-acid chain: Large ribosomal subunit protein uL23 (86 aa).

The protein belongs to the universal ribosomal protein uL23 family. As to quaternary structure, part of the 50S ribosomal subunit. Contacts protein L29.

Binds to 23S rRNA. One of the proteins that surrounds the polypeptide exit tunnel on the outside of the ribosome. This Methanobrevibacter smithii (strain ATCC 35061 / DSM 861 / OCM 144 / PS) protein is Large ribosomal subunit protein uL23.